The following is a 157-amino-acid chain: Peptide methionine sulfoxide reductase MsrA (157 aa).

Cys-10 is an active-site residue.

The protein belongs to the MsrA Met sulfoxide reductase family.

The catalysed reaction is L-methionyl-[protein] + [thioredoxin]-disulfide + H2O = L-methionyl-(S)-S-oxide-[protein] + [thioredoxin]-dithiol. It catalyses the reaction [thioredoxin]-disulfide + L-methionine + H2O = L-methionine (S)-S-oxide + [thioredoxin]-dithiol. Functionally, has an important function as a repair enzyme for proteins that have been inactivated by oxidation. Catalyzes the reversible oxidation-reduction of methionine sulfoxide in proteins to methionine. In Clostridium perfringens (strain ATCC 13124 / DSM 756 / JCM 1290 / NCIMB 6125 / NCTC 8237 / Type A), this protein is Peptide methionine sulfoxide reductase MsrA.